Here is a 426-residue protein sequence, read N- to C-terminus: Serine hydroxymethyltransferase 1 (426 aa).

(6S)-5,6,7,8-tetrahydrofolate-binding positions include Leu118 and 122 to 124 (GHL). Position 227 is an N6-(pyridoxal phosphate)lysine (Lys227).

The protein belongs to the SHMT family. As to quaternary structure, homodimer. Requires pyridoxal 5'-phosphate as cofactor.

Its subcellular location is the cytoplasm. It catalyses the reaction (6R)-5,10-methylene-5,6,7,8-tetrahydrofolate + glycine + H2O = (6S)-5,6,7,8-tetrahydrofolate + L-serine. It functions in the pathway one-carbon metabolism; tetrahydrofolate interconversion. The protein operates within amino-acid biosynthesis; glycine biosynthesis; glycine from L-serine: step 1/1. Functionally, catalyzes the reversible interconversion of serine and glycine with tetrahydrofolate (THF) serving as the one-carbon carrier. This reaction serves as the major source of one-carbon groups required for the biosynthesis of purines, thymidylate, methionine, and other important biomolecules. Also exhibits THF-independent aldolase activity toward beta-hydroxyamino acids, producing glycine and aldehydes, via a retro-aldol mechanism. This chain is Serine hydroxymethyltransferase 1, found in Mycobacterium bovis (strain ATCC BAA-935 / AF2122/97).